The chain runs to 147 residues: UPF0735 ACT domain-containing protein Cthe_1377 (147 aa).

Residues 71 to 146 enclose the ACT domain; that stretch reads TLFFTVEDYA…GVKRQEILAR (76 aa).

The protein belongs to the UPF0735 family.

The polypeptide is UPF0735 ACT domain-containing protein Cthe_1377 (Acetivibrio thermocellus (strain ATCC 27405 / DSM 1237 / JCM 9322 / NBRC 103400 / NCIMB 10682 / NRRL B-4536 / VPI 7372) (Clostridium thermocellum)).